Consider the following 372-residue polypeptide: Carbamoyl phosphate synthase small chain (372 aa).

The tract at residues 1–184 (MKAYIYLEND…SFQKFNDAKR (184 aa)) is CPSase. Residues Ser45, Gly240, and Gly242 each coordinate L-glutamine. The 185-residue stretch at 188-372 (KVAVIDYGVK…YIFKEFMNLM (185 aa)) folds into the Glutamine amidotransferase type-1 domain. The Nucleophile role is filled by Cys268. Leu269, Gln272, Asn310, and Tyr313 together coordinate L-glutamine. Residues His351 and Glu353 contribute to the active site.

The protein belongs to the CarA family. Composed of two chains; the small (or glutamine) chain promotes the hydrolysis of glutamine to ammonia, which is used by the large (or ammonia) chain to synthesize carbamoyl phosphate. Tetramer of heterodimers (alpha,beta)4.

The enzyme catalyses hydrogencarbonate + L-glutamine + 2 ATP + H2O = carbamoyl phosphate + L-glutamate + 2 ADP + phosphate + 2 H(+). It catalyses the reaction L-glutamine + H2O = L-glutamate + NH4(+). It participates in amino-acid biosynthesis; L-arginine biosynthesis; carbamoyl phosphate from bicarbonate: step 1/1. The protein operates within pyrimidine metabolism; UMP biosynthesis via de novo pathway; (S)-dihydroorotate from bicarbonate: step 1/3. In terms of biological role, small subunit of the glutamine-dependent carbamoyl phosphate synthetase (CPSase). CPSase catalyzes the formation of carbamoyl phosphate from the ammonia moiety of glutamine, carbonate, and phosphate donated by ATP, constituting the first step of 2 biosynthetic pathways, one leading to arginine and/or urea and the other to pyrimidine nucleotides. The small subunit (glutamine amidotransferase) binds and cleaves glutamine to supply the large subunit with the substrate ammonia. The chain is Carbamoyl phosphate synthase small chain from Campylobacter jejuni subsp. jejuni serotype O:2 (strain ATCC 700819 / NCTC 11168).